Here is a 636-residue protein sequence, read N- to C-terminus: uncharacterized protein (636 aa).

Disordered regions lie at residues 1 to 22 (MYNV…NEIG) and 81 to 107 (SSQT…PQNN). The Cytoplasmic segment spans residues 1 to 170 (MYNVRGDLNR…YFVGGEGLMQ (170 aa)). A helical; Signal-anchor for type II membrane protein membrane pass occupies residues 171 to 191 (LLFLLFLAAGTGMLFIGLPIL). At 192 to 636 (TYTGHNSLAS…RPKNSLMDGC (445 aa)) the chain is on the lumenal side. The region spanning 218 to 587 (LRYGSLIDPD…YVRIYQDSSD (370 aa)) is the GH16 domain. Residues Asn-291, Asn-378, Asn-429, Asn-464, Asn-489, and Asn-616 are each glycosylated (N-linked (GlcNAc...) asparagine).

Belongs to the SKN1/KRE6 family.

It localises to the endoplasmic reticulum membrane. In terms of biological role, required for synthesis of the major beta-glucans of the yeast cell wall. This is an uncharacterized protein from Schizosaccharomyces pombe (strain 972 / ATCC 24843) (Fission yeast).